Here is a 446-residue protein sequence, read N- to C-terminus: Probable rhamnogalacturonase A (446 aa).

Positions 1–18 (MPALPILALALAPLLVNG) are cleaved as a signal peptide. A disulfide bridge links cysteine 39 with cysteine 65. N-linked (GlcNAc...) asparagine glycans are attached at residues asparagine 50, asparagine 115, and asparagine 124. Aspartate 216 functions as the Proton donor in the catalytic mechanism. Cysteine 218 and cysteine 235 form a disulfide bridge. Asparagine 236 and asparagine 281 each carry an N-linked (GlcNAc...) asparagine glycan. The active site involves histidine 291. Asparagine 318 is a glycosylation site (N-linked (GlcNAc...) asparagine). Disulfide bonds link cysteine 341–cysteine 347 and cysteine 369–cysteine 378.

It belongs to the glycosyl hydrolase 28 family.

It is found in the secreted. It catalyses the reaction Endohydrolysis of alpha-D-GalA-(1-&gt;2)-alpha-L-Rha glycosidic bond in the rhamnogalacturonan I backbone with initial inversion of anomeric configuration releasing oligosaccharides with beta-D-GalA at the reducing end.. In terms of biological role, pectinolytic enzymes consist of four classes of enzymes: pectine lyase, polygalacturonase, pectin methylesterase and rhamnogalacturonase. Hydrolyzes alpha-D-galacturonopyranosyl-(1,2)-alpha-L-rhamnopyranosyl linkages in the backbone of the hairy regions of pectins. The chain is Probable rhamnogalacturonase A (rhgA) from Aspergillus niger (strain ATCC MYA-4892 / CBS 513.88 / FGSC A1513).